Consider the following 674-residue polypeptide: Growth arrest-specific protein 6 (674 aa).

Positions M1 to T27 are cleaved as a signal peptide. A Gla domain is found at F50–E91. Cysteines 62 and 67 form a disulfide. Phosphoserine is present on S68. An EGF-like 1; calcium-binding domain is found at L113–D151. 14 disulfide bridges follow: C117-C130, C122-C139, C141-C150, C157-C168, C164-C177, C179-C192, C198-C209, C204-C218, C220-C233, C239-C248, C244-C257, C259-C274, C280-C566, and C441-C467. One can recognise an EGF-like 2; calcium-binding domain in the interval D153–Q193. In terms of domain architecture, EGF-like 3; calcium-binding spans D194–Q234. In terms of domain architecture, EGF-like 4; calcium-binding spans D235–E275. Laminin G-like domains are found at residues G295–C467 and G474–C666. 2 residues coordinate Ca(2+): D326 and E328. N-linked (GlcNAc...) asparagine glycosylation occurs at N417. R437 is a binding site for Ca(2+). N488 is a glycosylation site (N-linked (GlcNAc...) asparagine). Phosphothreonine is present on T609. S614 carries the phosphoserine modification. Phosphothreonine occurs at positions 617 and 633. Y636 is modified (phosphotyrosine). C639 and C666 are joined by a disulfide. Position 652 (D652) interacts with Ca(2+).

Heterodimer and heterotetramer with AXL. In terms of processing, gamma-carboxyglutamate residues are formed by vitamin K dependent carboxylation. These residues are essential for the binding of calcium.

The protein localises to the secreted. Functionally, ligand for tyrosine-protein kinase receptors AXL, TYRO3 and MER whose signaling is implicated in cell growth and survival, cell adhesion and cell migration. GAS6/AXL signaling plays a role in various processes such as endothelial cell survival during acidification by preventing apoptosis, optimal cytokine signaling during human natural killer cell development, hepatic regeneration, gonadotropin-releasing hormone neuron survival and migration, platelet activation, or regulation of thrombotic responses. This chain is Growth arrest-specific protein 6 (Gas6), found in Mus musculus (Mouse).